A 251-amino-acid polypeptide reads, in one-letter code: 2,3-bisphosphoglycerate-dependent phosphoglycerate mutase (251 aa).

Substrate-binding positions include 8 to 15 (RHGESLWN), 21 to 22 (TG), Arg60, 87 to 90 (ERHY), Lys98, 114 to 115 (RR), and 183 to 184 (GN). His9 functions as the Tele-phosphohistidine intermediate in the catalytic mechanism. Glu87 functions as the Proton donor/acceptor in the catalytic mechanism.

Belongs to the phosphoglycerate mutase family. BPG-dependent PGAM subfamily.

The enzyme catalyses (2R)-2-phosphoglycerate = (2R)-3-phosphoglycerate. The protein operates within carbohydrate degradation; glycolysis; pyruvate from D-glyceraldehyde 3-phosphate: step 3/5. Functionally, catalyzes the interconversion of 2-phosphoglycerate and 3-phosphoglycerate. This is 2,3-bisphosphoglycerate-dependent phosphoglycerate mutase from Thermoanaerobacter sp. (strain X514).